A 495-amino-acid chain; its full sequence is ATP synthase subunit beta, chloroplastic (495 aa).

ATP is bound at residue 172–179 (GGAGVGKT).

The protein belongs to the ATPase alpha/beta chains family. As to quaternary structure, F-type ATPases have 2 components, CF(1) - the catalytic core - and CF(0) - the membrane proton channel. CF(1) has five subunits: alpha(3), beta(3), gamma(1), delta(1), epsilon(1). CF(0) has four main subunits: a(1), b(1), b'(1) and c(9-12).

The protein localises to the plastid. It localises to the chloroplast thylakoid membrane. It catalyses the reaction ATP + H2O + 4 H(+)(in) = ADP + phosphate + 5 H(+)(out). In terms of biological role, produces ATP from ADP in the presence of a proton gradient across the membrane. The catalytic sites are hosted primarily by the beta subunits. The chain is ATP synthase subunit beta, chloroplastic from Eucomis bicolor (King's flower).